We begin with the raw amino-acid sequence, 1648 residues long: Cortactin-binding protein 2 (1648 aa).

Disordered regions lie at residues 1–26 (MATDSASCEPDLSRTPGDTEGATAEA), 200–250 (EEKK…EEAH), 322–439 (PLTV…PGLN), 451–476 (GNANDPDQNGNNTQSPPSRDVSPTSR), and 492–608 (ALSR…PSID). Positions 119-274 (KMQERMSAQL…MEQMKKGSDG (156 aa)) form a coiled coil. Composition is skewed to basic and acidic residues over residues 200-218 (EEKKKTSELEEQLSAEKQR) and 225-250 (QLEKQLSEFDTEREQLRAKLSREEAH). Polar residues-rich tracts occupy residues 330–342 (STGSPLVPTNTKG) and 372–392 (LPSSANRIEENGPSTGNAPDL). Positions 393-415 (SNSTPSTPSSTAPAAAQTPGTAP) are enriched in low complexity. Polar residues predominate over residues 492-503 (ALSRFTSPQAGA). Asymmetric dimethylarginine is present on R495. 6 ANK repeats span residues 699-729 (GRPTLLQQAAAQGNVTLLSMLLNEEGLDINY), 733-762 (DGHSALYSAAKNGHTDCVRLLLNAEARVDA), 766-795 (NGFTPLCVAAAQGHFECIELLTAYNANINH), 799-828 (GGQTPLYLACKNGNKECIKLLLEAGTDRSI), 832-861 (DGWTPIHAAVDTGNVDSLKLLMYHRVRAHG), and 901-931 (EGWTAAHIAASKGFKNCLEVLCRHGGLEPER). A disordered region spans residues 1438-1492 (SGAWRKVNTSPRKKPGHFSSPTWNKPDPKREGMRNKTIPHLNTNRNSSLSKQQSL). Positions 1477–1492 (HLNTNRNSSLSKQQSL) are enriched in polar residues. S1510 bears the Phosphoserine mark. The interval 1522-1648 (SMCSSKSESD…KHEQVEKPNK (127 aa)) is disordered. The segment covering 1528 to 1547 (SESDISKIADSRDDLRKFDS) has biased composition (basic and acidic residues). 2 stretches are compositionally biased toward polar residues: residues 1548-1557 (SRTNPGTSAP) and 1571-1584 (PPSSRQTAECSNSK). A compositionally biased stretch (low complexity) spans 1609 to 1623 (SQNTKRNSSSSNTRQ). A compositionally biased stretch (basic and acidic residues) spans 1630–1648 (SKEENWTLDKHEQVEKPNK).

In terms of assembly, interacts with CTTN/cortactin SH3 domain. Interacts with STRN, STRN4/zinedin and MOB4/phocein; this interactions mediate the association with the STRIPAK core complex and may regulate dendritic spine distribution of the STRIPAK complex in hippocampal neurons. Activation of glutamate receptors weakens the interaction with STRN and STRN4. Isoform 2 is predominantly expressed in brain (at protein level). In the brain, expressed at high levels in hypothalamus and striatum and at lower levels in cerebellum and cortex.

It is found in the cytoplasm. The protein localises to the cell cortex. The protein resides in the cell projection. Its subcellular location is the dendritic spine. Functionally, regulates the dendritic spine distribution of CTTN/cortactin in hippocampal neurons, and thus controls dendritic spinogenesis and dendritic spine maintenance. Associates with the striatin-interacting phosphatase and kinase (STRIPAK) core complex to regulate dendritic spine distribution of the STRIPAK complex in hippocampal neurons. In Mus musculus (Mouse), this protein is Cortactin-binding protein 2 (Cttnbp2).